We begin with the raw amino-acid sequence, 1114 residues long: Extracellular sulfatase SULF-1 homolog (1114 aa).

The signal sequence occupies residues 1-25; sequence MMRHSSLRLIIGGLILLLFVLNVFS. Aspartate 62, aspartate 63, and cysteine 98 together coordinate Ca(2+). Cysteine 98 serves as the catalytic Nucleophile. A 3-oxoalanine (Cys) modification is found at cysteine 98. N-linked (GlcNAc...) asparagine glycosylation is found at asparagine 122, asparagine 159, asparagine 181, asparagine 208, and asparagine 251. Aspartate 327 and histidine 328 together coordinate Ca(2+). N-linked (GlcNAc...) asparagine glycosylation occurs at asparagine 447. Low complexity predominate over residues 466–479; the sequence is SSSSTAATLMSSTA. Residues 466-504 form a disordered region; that stretch reads SSSSTAATLMSSTAQQPEDGEEEVETDNEEDDVDGDGAM. The span at 483 to 502 shows a compositional bias: acidic residues; it reads EDGEEEVETDNEEDDVDGDG. 3 N-linked (GlcNAc...) asparagine glycosylation sites follow: asparagine 683, asparagine 713, and asparagine 743. A disordered region spans residues 781–812; the sequence is KQLRESNKQALAAGRRNDNRRRNDQSVLDSGA. Residues 795–804 are compositionally biased toward basic and acidic residues; that stretch reads RRNDNRRRND. N-linked (GlcNAc...) asparagine glycosylation is present at asparagine 817. Positions 876 to 895 are enriched in basic and acidic residues; the sequence is ADSKEMAREARRKLKEERQR. Positions 876–901 are disordered; it reads ADSKEMAREARRKLKEERQRKKERKR. Residues asparagine 945, asparagine 955, and asparagine 974 are each glycosylated (N-linked (GlcNAc...) asparagine). A disordered region spans residues 1073 to 1114; that stretch reads LSKYNRLTGSQQSHMKRRPWKQTPLQQSPRFLRTHSVTPAQA. A compositionally biased stretch (polar residues) spans 1095 to 1114; sequence TPLQQSPRFLRTHSVTPAQA.

This sequence belongs to the sulfatase family. The cofactor is Ca(2+). The conversion to 3-oxoalanine (also known as C-formylglycine, FGly), of a serine or cysteine residue in prokaryotes and of a cysteine residue in eukaryotes, is critical for catalytic activity.

The protein localises to the endoplasmic reticulum. It is found in the golgi apparatus. Its subcellular location is the golgi stack. It localises to the cell surface. This is Extracellular sulfatase SULF-1 homolog (Sulf1) from Drosophila melanogaster (Fruit fly).